Here is a 145-residue protein sequence, read N- to C-terminus: Transmembrane protein 216 (145 aa).

The next 4 helical transmembrane spans lie at Ile22–Phe42, Leu56–Phe76, Leu89–Leu109, and Gly122–Phe142.

As to quaternary structure, part of the tectonic-like complex (also named B9 complex). Interacts with TMEM107.

The protein localises to the membrane. Its subcellular location is the cytoplasm. It is found in the cytoskeleton. The protein resides in the cilium basal body. Functionally, part of the tectonic-like complex which is required for tissue-specific ciliogenesis and may regulate ciliary membrane composition. This Homo sapiens (Human) protein is Transmembrane protein 216 (TMEM216).